The sequence spans 518 residues: Probable carboxypeptidase 2 (518 aa).

The N-terminal stretch at 1–21 is a signal peptide; sequence MVAYHLLTLISLGLGSHCASA. A glycan (N-linked (GlcNAc...) asparagine) is linked at Asn46. The tract at residues 53–76 is disordered; the sequence is PAFTSPGTVPRGFSDGTSGPTRDE. The 281-residue stretch at 71-351 folds into the Peptidase M14 domain; sequence GPTRDETMEG…VMAKSILQTA (281 aa). Asn116 carries N-linked (GlcNAc...) asparagine glycosylation. Zn(2+) contacts are provided by His136, Glu139, and His224. The active-site Proton donor/acceptor is Glu322. N-linked (GlcNAc...) asparagine glycosylation is found at Asn393 and Asn459.

Belongs to the peptidase M14 family. Zn(2+) serves as cofactor.

The protein resides in the secreted. In terms of biological role, extracellular metalloprotease that contributes to pathogenicity. The chain is Probable carboxypeptidase 2 (MCPB) from Trichophyton verrucosum (strain HKI 0517).